A 1335-amino-acid chain; its full sequence is Mediator of RNA polymerase II transcription subunit 15a (1335 aa).

Disordered regions lie at residues 1–27 (MDNNNWRPSLPNGEPAMDTGDWRTQLP), 109–172 (GTSI…NNNT), 190–225 (QDSSGQHGLSSNMFSGPQRQMLGRPHAMSSQQQQQP), 241–389 (FQSG…QHQQ), 401–448 (IQQQ…TQSN), 496–525 (LYSSQGQQSQNQPSQQQMMPQLQSHHQQLG), 567–591 (SQRTLPEMPSSSLDSTAQTESANGG), and 683–815 (HRPR…QSNV). 3 stretches are compositionally biased toward polar residues: residues 110–158 (TSID…TALP), 190–207 (QDSSGQHGLSSNMFSGPQ), and 241–257 (FQSGNVPNPNSLLPSHI). Residues 258 to 270 (QQQQQNVLQPNQL) show a composition bias toward low complexity. A compositionally biased stretch (polar residues) spans 271–299 (HSSQQPGVPTSATQPSTVNSAPLQGLHTN). A compositionally biased stretch (low complexity) spans 300-314 (QQSSPQLSSQQTTQS). Polar residues predominate over residues 315-328 (MLRQHQSSMLRQHP). A compositionally biased stretch (low complexity) spans 329–362 (QSQQASGIHQQQSSLPQQSISPLQQQPTQLMRQQ). Over residues 363–374 (AANSSGIQQKQM) the composition is skewed to polar residues. The segment covering 401–436 (IQQQQSQQQPLQQPQQQQKQQPPAQQQLMSQQNSLQ) has biased composition (low complexity). The segment covering 437 to 448 (ATHQNPLGTQSN) has biased composition (polar residues). The span at 498 to 525 (SSQGQQSQNQPSQQQMMPQLQSHHQQLG) shows a compositional bias: low complexity. Polar residues predominate over residues 567 to 588 (SQRTLPEMPSSSLDSTAQTESA). The span at 688-712 (PVQQGQLPQSQMQPMQQPQSQTVQD) shows a compositional bias: low complexity. Polar residues-rich tracts occupy residues 716–728 (DNQTNPQMQSMSM), 735–749 (AQQSSMTNMQSNVLS), and 756–815 (APQQ…QSNV). A coiled-coil region spans residues 834–882 (QDQQMQLKQQFQQRQMQQQQLQARQQQQQQQLQARQQAAQLQQMNDMND). Disordered regions lie at residues 947-986 (KMGTPLQPANSPFVVPSPSSTPLAPSPMQVDSEKPGSSSL) and 1146-1165 (FAGSETSDLESTATSDGKKA). Residues 957–973 (SPFVVPSPSSTPLAPSP) are compositionally biased toward low complexity. Positions 1148–1160 (GSETSDLESTATS) are enriched in polar residues.

It belongs to the plant Mediator complex subunit 15 family. Component of the Mediator complex.

The protein resides in the nucleus. In terms of biological role, component of the Mediator complex, a coactivator involved in the regulated transcription of nearly all RNA polymerase II-dependent genes. Mediator functions as a bridge to convey information from gene-specific regulatory proteins to the basal RNA polymerase II transcription machinery. The Mediator complex, having a compact conformation in its free form, is recruited to promoters by direct interactions with regulatory proteins and serves for the assembly of a functional preinitiation complex with RNA polymerase II and the general transcription factors. This is Mediator of RNA polymerase II transcription subunit 15a (MED15A) from Arabidopsis thaliana (Mouse-ear cress).